Reading from the N-terminus, the 463-residue chain is Soluble pyridine nucleotide transhydrogenase (463 aa).

35 to 44 (EKQQAVGGNC) lines the FAD pocket.

Belongs to the class-I pyridine nucleotide-disulfide oxidoreductase family. FAD serves as cofactor.

The protein localises to the cytoplasm. It catalyses the reaction NAD(+) + NADPH = NADH + NADP(+). In terms of biological role, conversion of NADPH, generated by peripheral catabolic pathways, to NADH, which can enter the respiratory chain for energy generation. The polypeptide is Soluble pyridine nucleotide transhydrogenase (Chromohalobacter salexigens (strain ATCC BAA-138 / DSM 3043 / CIP 106854 / NCIMB 13768 / 1H11)).